The following is a 372-amino-acid chain: sn-glycerol-3-phosphate import ATP-binding protein UgpC (372 aa).

An ABC transporter domain is found at 2-233 (LDIKQLVKTY…PASTFVASFI (232 aa)). ATP is bound at residue 35-42 (GPSGCGKS).

The protein belongs to the ABC transporter superfamily. sn-glycerol-3-phosphate importer (TC 3.A.1.1.3) family. In terms of assembly, the complex is composed of two ATP-binding proteins (UgpC), two transmembrane proteins (UgpA and UgpE) and a solute-binding protein (UgpB).

It is found in the cell inner membrane. The catalysed reaction is sn-glycerol 3-phosphate(out) + ATP + H2O = sn-glycerol 3-phosphate(in) + ADP + phosphate + H(+). Functionally, part of the ABC transporter complex UgpBAEC involved in sn-glycerol-3-phosphate (G3P) import. Responsible for energy coupling to the transport system. The chain is sn-glycerol-3-phosphate import ATP-binding protein UgpC from Vibrio cholerae serotype O1 (strain ATCC 39315 / El Tor Inaba N16961).